Here is a 63-residue protein sequence, read N- to C-terminus: Sec-independent protein translocase protein TatA (63 aa).

The helical transmembrane segment at 1-21 (MGSFSMWHWLIVLVIVLLLFG) threads the bilayer. The segment at 42-63 (GMTDDDAPDTAKTVDHKADETK) is disordered. Over residues 53–63 (KTVDHKADETK) the composition is skewed to basic and acidic residues.

Belongs to the TatA/E family. As to quaternary structure, the Tat system comprises two distinct complexes: a TatABC complex, containing multiple copies of TatA, TatB and TatC subunits, and a separate TatA complex, containing only TatA subunits. Substrates initially bind to the TatABC complex, which probably triggers association of the separate TatA complex to form the active translocon.

The protein localises to the cell inner membrane. Part of the twin-arginine translocation (Tat) system that transports large folded proteins containing a characteristic twin-arginine motif in their signal peptide across membranes. TatA could form the protein-conducting channel of the Tat system. The protein is Sec-independent protein translocase protein TatA of Rhizobium etli (strain CIAT 652).